A 303-amino-acid polypeptide reads, in one-letter code: Cilia- and flagella-associated protein 161 (303 aa).

As to quaternary structure, microtubule inner protein component of sperm flagellar doublet microtubules.

The protein localises to the cytoplasm. The protein resides in the cytoskeleton. It is found in the cilium axoneme. Its subcellular location is the flagellum axoneme. Functionally, microtubule inner protein (MIP) part of the dynein-decorated doublet microtubules (DMTs) in cilia axoneme, which is required for motile cilia beating. The protein is Cilia- and flagella-associated protein 161 of Mus musculus (Mouse).